Consider the following 664-residue polypeptide: MKKIFDDIYVGSNIISKLNDYTEDFDKILIFSNETIADLYFEKFKSTLNEKDKVFYFAIKDGEEYKNIESILPVYDFMLENNFSRKSLIISLGGGVICDMGGYISATYMRGIEFIQVPTSLLAQVDASVGGKVAINHPKCKNMIGSFKNPYRVIIDVEFLKTLPKREFKSGMGELLKHSFLTKDKSYLEYIENNVEKIKNLDNEVLENIVEQSIRIKKHYVDIDPFEKGERAFLNLGHTYAHALESFFDYKAYTHGEAVSKGIIFDLELSLLRGQIDKEYLERARNIFKLFDIDTDLIYLPSDKFIPLMRKDKKNSFNKIITILLDSEGHLSKTEVKEDEIVKIIDKYKNNFLRASIDIGTNSCRLLIAEVEKDNENITFKKEIYKDLEIVKLGEDVNKNKFLKEEAIERTLKCLKKYRKIIDKYSIEEKNIICFATSATRDSTNKDYFIKKVFDETKIKINCISGDKEAYINFKGVISSFDRDFKDNILVFDIGGGSTEFTLGNMQGIEKKISLNIGSVRITEKFFLNNKLYNYSEENRIKAKDWVKENLKELEDFKKLNFSLIGVAGTTTTQVSVREKMEVYDSEKIHLSNLTSKEINDNLSLFIKNINKQEIKGLDPKRKDVIIGGTIILKEILDYFGKDFIIVSENDNLMGAILEGVENK.

Residues 1 to 352 are 3-dehydroquinate synthase; that stretch reads MKKIFDDIYV…KIIDKYKNNF (352 aa). NAD(+)-binding positions include 61–66, 95–99, 119–120, lysine 132, lysine 141, and 159–162; these read DGEEYK, GVICD, TS, and FLKT. Residues glutamate 174, histidine 238, and histidine 255 each contribute to the Zn(2+) site. Residues 353-664 form a GPPA/PPX region; sequence LRASIDIGTN…GAILEGVENK (312 aa).

In the N-terminal section; belongs to the sugar phosphate cyclases superfamily. Dehydroquinate synthase family. This sequence in the C-terminal section; belongs to the GppA/Ppx family. Monomer. The cofactor is NAD(+). It depends on Co(2+) as a cofactor. Zn(2+) serves as cofactor.

It is found in the cytoplasm. It carries out the reaction 7-phospho-2-dehydro-3-deoxy-D-arabino-heptonate = 3-dehydroquinate + phosphate. Its pathway is metabolic intermediate biosynthesis; chorismate biosynthesis; chorismate from D-erythrose 4-phosphate and phosphoenolpyruvate: step 2/7. The protein is Bifunctional 3-dehydroquinate synthase/phosphatase (aroB) of Fusobacterium nucleatum subsp. nucleatum (strain ATCC 25586 / DSM 15643 / BCRC 10681 / CIP 101130 / JCM 8532 / KCTC 2640 / LMG 13131 / VPI 4355).